The sequence spans 130 residues: D-ribose pyranase (130 aa).

Residue H20 is the Proton donor of the active site. Substrate contacts are provided by residues D28, H97, and 119 to 121; that span reads YSN.

The protein belongs to the RbsD / FucU family. RbsD subfamily. Homodecamer.

Its subcellular location is the cytoplasm. It catalyses the reaction beta-D-ribopyranose = beta-D-ribofuranose. Its pathway is carbohydrate metabolism; D-ribose degradation; D-ribose 5-phosphate from beta-D-ribopyranose: step 1/2. Catalyzes the interconversion of beta-pyran and beta-furan forms of D-ribose. This chain is D-ribose pyranase, found in Lacticaseibacillus casei (strain BL23) (Lactobacillus casei).